Consider the following 547-residue polypeptide: NADH-ubiquinone oxidoreductase chain 5 (547 aa).

15 helical membrane-spanning segments follow: residues 3 to 23 (ISIF…IFFV), 45 to 65 (YFNS…VLVF), 80 to 100 (YFML…SGCF), 101 to 121 (SMLV…LFYN), 132 to 152 (TVLT…STIF), 198 to 218 (ISSL…IMNF), 227 to 247 (VIMI…MAAL), 264 to 284 (MGFS…IHLL), 319 to 339 (VPYF…GLVF), 352 to 372 (FFFS…SVFL), 399 to 419 (VVMN…IWWM), 430 to 450 (FLYV…VVGF), 460 to 477 (FVYK…VYGL), 485 to 505 (LFLG…GFWS), and 512 to 532 (LYFN…WGCI).

The protein belongs to the complex I subunit 5 family.

It localises to the mitochondrion inner membrane. The enzyme catalyses a ubiquinone + NADH + 5 H(+)(in) = a ubiquinol + NAD(+) + 4 H(+)(out). In terms of biological role, core subunit of the mitochondrial membrane respiratory chain NADH dehydrogenase (Complex I) that is believed to belong to the minimal assembly required for catalysis. Complex I functions in the transfer of electrons from NADH to the respiratory chain. The immediate electron acceptor for the enzyme is believed to be ubiquinone. The protein is NADH-ubiquinone oxidoreductase chain 5 (ND5) of Ascaris suum (Pig roundworm).